The chain runs to 291 residues: Tyrosine isonitrile desaturase (291 aa).

Residues His110, Asp112, and His259 each coordinate Fe cation.

The protein belongs to the TfdA dioxygenase family. As to quaternary structure, homotrimer in solution. Fe(2+) is required as a cofactor.

The catalysed reaction is (2S)-3-(4-hydroxyphenyl)-2-isocyanopropanoate + 2-oxoglutarate + O2 = (2E)-3-(4-hydroxyphenyl)-2-isocyanoprop-2-enoate + succinate + CO2 + H2O. Functionally, involved in the biosynthesis of paerucumarin, a cyclized isocyano derivative of tyrosine. Catalyzes the 2-oxoglutarate-dependent oxidation of tyrosine isonitrile. This Pseudomonas aeruginosa (strain ATCC 15692 / DSM 22644 / CIP 104116 / JCM 14847 / LMG 12228 / 1C / PRS 101 / PAO1) protein is Tyrosine isonitrile desaturase.